A 498-amino-acid polypeptide reads, in one-letter code: Guanosine-5'-triphosphate,3'-diphosphate pyrophosphatase (498 aa).

The protein belongs to the GppA/Ppx family. GppA subfamily.

It catalyses the reaction guanosine 3'-diphosphate 5'-triphosphate + H2O = guanosine 3',5'-bis(diphosphate) + phosphate + H(+). Its pathway is purine metabolism; ppGpp biosynthesis; ppGpp from GTP: step 2/2. Its function is as follows. Catalyzes the conversion of pppGpp to ppGpp. Guanosine pentaphosphate (pppGpp) is a cytoplasmic signaling molecule which together with ppGpp controls the 'stringent response', an adaptive process that allows bacteria to respond to amino acid starvation, resulting in the coordinated regulation of numerous cellular activities. The sequence is that of Guanosine-5'-triphosphate,3'-diphosphate pyrophosphatase from Serratia proteamaculans (strain 568).